Consider the following 407-residue polypeptide: Growth/differentiation factor 11 (407 aa).

The N-terminal stretch at 1–24 (MVLAAPLLLGFLLLALELRPRGEA) is a signal peptide. A propeptide spanning residues 25 to 298 (AEGPAAAAAA…VLENTKRSRR (274 aa)) is cleaved from the precursor. Asn-94 carries an N-linked (GlcNAc...) asparagine glycan. 4 disulfide bridges follow: Cys-304/Cys-314, Cys-313/Cys-372, Cys-341/Cys-404, and Cys-345/Cys-406.

The protein belongs to the TGF-beta family. In terms of assembly, homodimer; disulfide-linked. Interacts directly with ACVR2B. Interacts directly with ACVR2A. Interacts with ACVR1B, TGFBR1 and ACVR1C in an ACVR2B-dependent manner. Interacts with FST isoform 2/FS-288. In terms of processing, synthesized as large precursor molecule that undergoes proteolytic cleavage by furin-like proteases. This produces an inactive form consisting of the mature C-terminal portion non-covalently bound to its cleaved N-terminal propeptide. Activation of the mature form requires additional cleavage of the propeptide by a tolloid-like metalloproteinase. As to expression, in the embryo, strong expression is seen in the palatal epithelia, including the medial edge epithelial and midline epithelial seam of the palatal shelves. Less pronounced expression is also seen throughout the palatal shelf and tongue mesenchyme.

It localises to the secreted. In terms of biological role, secreted signal that acts globally to regulate anterior/posterior axial patterning during development. May play critical roles in patterning both mesodermal and neural tissues. It is required for proper vertebral patterning and orofacial development. Signals through activin receptors type-2, ACVR2A and ACVR2B, and activin receptors type-1, ACVR1B, ACVR1C and TGFBR1 leading to the phosphorylation of SMAD2 and SMAD3. The chain is Growth/differentiation factor 11 (GDF11) from Homo sapiens (Human).